A 434-amino-acid polypeptide reads, in one-letter code: Chaperone SurA (434 aa).

The signal sequence occupies residues 1-22; it reads MKHSKKIIFALLALAMSNTSMA. PpiC domains are found at residues 173–274 and 283–383; these read DVEF…KVVD and VEEV…QLES.

It is found in the periplasm. The catalysed reaction is [protein]-peptidylproline (omega=180) = [protein]-peptidylproline (omega=0). Its function is as follows. Chaperone involved in the correct folding and assembly of outer membrane proteins. Recognizes specific patterns of aromatic residues and the orientation of their side chains, which are found more frequently in integral outer membrane proteins. May act in both early periplasmic and late outer membrane-associated steps of protein maturation. The protein is Chaperone SurA of Shewanella frigidimarina (strain NCIMB 400).